The primary structure comprises 263 residues: uncharacterized protein (263 aa).

ATP is bound at residue 31 to 38 (GPTGSGKT).

It belongs to the CbbQ/NirQ/NorQ/GpvN family.

This is an uncharacterized protein from Staphylococcus haemolyticus (strain JCSC1435).